The primary structure comprises 193 residues: Probable GTP-binding protein EngB (193 aa).

An EngB-type G domain is found at 19–188; the sequence is SVKEVCFMGR…HKQIFELFKA (170 aa). GTP contacts are provided by residues 27-34, 53-57, 70-73, 136-139, and 167-169; these read GRSNVGKS, GRTQL, DLPG, NKFD, and VSA. Residues S34 and T55 each coordinate Mg(2+).

Belongs to the TRAFAC class TrmE-Era-EngA-EngB-Septin-like GTPase superfamily. EngB GTPase family. Mg(2+) is required as a cofactor.

Necessary for normal cell division and for the maintenance of normal septation. The protein is Probable GTP-binding protein EngB of Mycoplasma pneumoniae (strain ATCC 29342 / M129 / Subtype 1) (Mycoplasmoides pneumoniae).